Consider the following 351-residue polypeptide: DNA polymerase IV (351 aa).

In terms of domain architecture, UmuC spans 4 to 185 (IIHVDMDCFF…LPLEKIPGVG (182 aa)). The Mg(2+) site is built by Asp-8 and Asp-103. Glu-104 is an active-site residue.

The protein belongs to the DNA polymerase type-Y family. As to quaternary structure, monomer. It depends on Mg(2+) as a cofactor.

The protein resides in the cytoplasm. It catalyses the reaction DNA(n) + a 2'-deoxyribonucleoside 5'-triphosphate = DNA(n+1) + diphosphate. Poorly processive, error-prone DNA polymerase involved in untargeted mutagenesis. Copies undamaged DNA at stalled replication forks, which arise in vivo from mismatched or misaligned primer ends. These misaligned primers can be extended by PolIV. Exhibits no 3'-5' exonuclease (proofreading) activity. May be involved in translesional synthesis, in conjunction with the beta clamp from PolIII. This chain is DNA polymerase IV, found in Shigella flexneri.